A 294-amino-acid chain; its full sequence is 4-hydroxy-tetrahydrodipicolinate synthase (294 aa).

T45 contacts pyruvate. Y133 (proton donor/acceptor) is an active-site residue. The Schiff-base intermediate with substrate role is filled by K161. A pyruvate-binding site is contributed by I203.

The protein belongs to the DapA family. As to quaternary structure, homotetramer; dimer of dimers.

It is found in the cytoplasm. The catalysed reaction is L-aspartate 4-semialdehyde + pyruvate = (2S,4S)-4-hydroxy-2,3,4,5-tetrahydrodipicolinate + H2O + H(+). Its pathway is amino-acid biosynthesis; L-lysine biosynthesis via DAP pathway; (S)-tetrahydrodipicolinate from L-aspartate: step 3/4. Its function is as follows. Catalyzes the condensation of (S)-aspartate-beta-semialdehyde [(S)-ASA] and pyruvate to 4-hydroxy-tetrahydrodipicolinate (HTPA). This Shewanella sp. (strain ANA-3) protein is 4-hydroxy-tetrahydrodipicolinate synthase.